The chain runs to 129 residues: UPF0047 protein Mb2586c (129 aa).

This sequence belongs to the UPF0047 family.

The chain is UPF0047 protein Mb2586c from Mycobacterium bovis (strain ATCC BAA-935 / AF2122/97).